We begin with the raw amino-acid sequence, 699 residues long: Extracellular matrix protein 2 (699 aa).

A signal peptide spans M1–G20. Positions G101–S158 constitute a VWFC domain. The segment covering E176–E186 has biased composition (basic and acidic residues). The interval E176–L316 is disordered. Over residues Q212–T224 the composition is skewed to acidic residues. A compositionally biased stretch (basic and acidic residues) spans G243–L260. Residues E270–D291 are compositionally biased toward acidic residues. Positions R294–D296 match the Cell attachment site motif. One can recognise an LRRNT domain in the interval P307 to Q344. 13 LRR repeats span residues N368 to A388, K394 to T415, L416 to D436, Q439 to A459, S465 to P484, S486 to H507, K510 to A530, N536 to S557, L558 to H578, G582 to S602, S609 to M630, A632 to N653, and N661 to C684. An N-linked (GlcNAc...) asparagine glycan is attached at N378. N-linked (GlcNAc...) asparagine glycosylation occurs at N449. N-linked (GlcNAc...) asparagine glycosylation occurs at N506.

This sequence belongs to the small leucine-rich proteoglycan (SLRP) family. SLRP class I subfamily. Interacts with numerous extracellular matrix proteins. Interacts with MSL1 and RASSF1. In terms of tissue distribution, expressed predominantly in adipose tissue as well as female-specific organs such as mammary gland, ovary, and uterus.

The protein resides in the secreted. Its subcellular location is the extracellular space. It is found in the extracellular matrix. In terms of biological role, promotes matrix assembly and cell adhesiveness. The chain is Extracellular matrix protein 2 (ECM2) from Homo sapiens (Human).